Here is a 137-residue protein sequence, read N- to C-terminus: Large ribosomal subunit protein uL16c (137 aa).

It belongs to the universal ribosomal protein uL16 family. As to quaternary structure, part of the 50S ribosomal subunit.

The protein resides in the plastid. This is Large ribosomal subunit protein uL16c (rpl16) from Helicosporidium sp. subsp. Simulium jonesii (Green alga).